Reading from the N-terminus, the 596-residue chain is Probable tripeptidyl-peptidase SED2 (596 aa).

Positions 1–16 (MRLLKFVCLLASVAAA) are cleaved as a signal peptide. A propeptide spans 17–203 (KPTPGASHKV…LESMSVEEFA (187 aa)) (removed in mature form). A Peptidase S53 domain is found at 210-596 (LVTTACLREL…NFQALTKVLP (387 aa)). N-linked (GlcNAc...) asparagine glycosylation is present at Asn265. Catalysis depends on charge relay system residues Glu286 and Asp290. Asn403 carries N-linked (GlcNAc...) asparagine glycosylation. The Charge relay system role is filled by Ser501. 2 residues coordinate Ca(2+): Asp543 and Ile544. Residue Asn572 is glycosylated (N-linked (GlcNAc...) asparagine). Ca(2+) is bound by residues Gly576 and Asp578.

Ca(2+) serves as cofactor.

It is found in the secreted. The protein localises to the extracellular space. The catalysed reaction is Release of an N-terminal tripeptide from a polypeptide.. Functionally, secreted tripeptidyl-peptidase which degrades proteins at acidic pHs and is involved in virulence. In Trichophyton verrucosum (strain HKI 0517), this protein is Probable tripeptidyl-peptidase SED2 (SED2).